A 214-amino-acid polypeptide reads, in one-letter code: Adenylate kinase (214 aa).

Position 10-15 (10-15) interacts with ATP; sequence GAGKGT. The interval 30–59 is NMP; that stretch reads STGDIFRANIKGNTPLGQKAKEYMDKGELV. AMP is bound by residues T31, R36, 57–59, 85–88, and Q92; these read ELV and GFPR. Residues 126 to 163 form an LID region; the sequence is GRRVCTNCGATYNVVFNPTKVEGICDVCNSPVIQRADD. R127 provides a ligand contact to ATP. C130 and C133 together coordinate Zn(2+). 136-137 lines the ATP pocket; that stretch reads TY. Residues C150 and C153 each coordinate Zn(2+). The AMP site is built by R160 and R171. G199 is a binding site for ATP.

This sequence belongs to the adenylate kinase family. In terms of assembly, monomer.

The protein localises to the cytoplasm. The catalysed reaction is AMP + ATP = 2 ADP. The protein operates within purine metabolism; AMP biosynthesis via salvage pathway; AMP from ADP: step 1/1. Its function is as follows. Catalyzes the reversible transfer of the terminal phosphate group between ATP and AMP. Plays an important role in cellular energy homeostasis and in adenine nucleotide metabolism. In Ruminiclostridium cellulolyticum (strain ATCC 35319 / DSM 5812 / JCM 6584 / H10) (Clostridium cellulolyticum), this protein is Adenylate kinase.